The primary structure comprises 200 residues: uncharacterized protein (200 aa).

This is an uncharacterized protein from Methanocaldococcus jannaschii (strain ATCC 43067 / DSM 2661 / JAL-1 / JCM 10045 / NBRC 100440) (Methanococcus jannaschii).